Here is a 130-residue protein sequence, read N- to C-terminus: UPF0102 protein RPA0323 (130 aa).

The protein belongs to the UPF0102 family.

This Rhodopseudomonas palustris (strain ATCC BAA-98 / CGA009) protein is UPF0102 protein RPA0323.